Consider the following 8886-residue polypeptide: Obscurin (8886 aa).

Ig-like domains follow at residues 9–99 (PRFL…LRVD), 109–201 (PHFL…LVVD), 234–320 (PPSP…QTYS), and 329–415 (PTVP…AELS). Cys-30 and Cys-81 are oxidised to a cystine. The interval 135–165 (SPQPAVSWSKDGRRLGPPDAPHVRVEEHGES) is disordered. The segment covering 144-164 (KDGRRLGPPDAPHVRVEEHGE) has biased composition (basic and acidic residues). Cystine bridges form between Cys-257/Cys-309 and Cys-352/Cys-402. Ser-393 carries the phosphoserine modification. The Fibronectin type-III 1 domain maps to 513–610 (PPADPVVKAK…FPGTMHLVPM (98 aa)). Ig-like domains follow at residues 702–793 (PSSK…QDIT), 859–951 (PKLV…VAEP), 951–1043 (PKLV…VAEP), 1043–1135 (PKMV…VTEP), 1135–1227 (PKLV…VAEP), 1227–1319 (PKLV…VTEP), 1319–1407 (PKLV…FRLD), 1411–1503 (PKLV…VAEP), 1503–1595 (PKLV…VAEP), 1595–1687 (PKLA…VAEP), 1687–1779 (PKLA…VAEP), 1779–1871 (PKLA…VAEP), 1871–1963 (PKLM…VAEP), 1963–2051 (PKLV…FRLD), 2055–2147 (TRLM…VAEA), 2152–2241 (PERP…EEVA), 2242–2325 (AKFS…ARLT), 2329–2415 (PRVV…AALR), 2420–2504 (PVLF…AKLN), 2598–2681 (PVSF…ASLR), 2721–2812 (PVTL…QSIT), 2900–2984 (PVVL…AEVT), 3078–3162 (PVVF…SKVS), 3258–3342 (PVDI…AKLC), 3348–3431 (NRFT…ARLL), 3527–3610 (PSIF…SSIV), 3616–3700 (PVRF…ATLT), 3785–3876 (ATLT…ATLT), 3881–3964 (PAKF…ATLT), 4042–4125 (PTKF…ATLS), 4130–4213 (PSRF…ATLS), 4219–4301 (PRFI…ATLN), 4307–4389 (PRFI…AVLT), 4395–4477 (PKFT…ATLS), 4483–4565 (PRFI…ATLS), 4571–4653 (PRFI…ATLS), 4659–4741 (PRFI…ATLS), 4746–4829 (PAKF…ATLS), 4833–4916 (PQVV…TSAT), 4923–5007 (PVRF…ARLS), 5013–5105 (PKFK…PEVT), 5378–5464 (LEVL…ARLS), and 5557–5659 (PQMV…TFNV). 14 cysteine pairs are disulfide-bonded: Cys-885–Cys-935, Cys-977–Cys-1027, Cys-1069–Cys-1119, Cys-1161–Cys-1211, Cys-1253–Cys-1303, Cys-1345–Cys-1395, Cys-1437–Cys-1487, Cys-1529–Cys-1579, Cys-1621–Cys-1671, Cys-1713–Cys-1763, Cys-1805–Cys-1855, Cys-1897–Cys-1947, Cys-1989–Cys-2039, and Cys-2081–Cys-2131. A disulfide bond links Cys-2263 and Cys-2313. 8 disulfides stabilise this stretch: Cys-2620/Cys-2669, Cys-2743/Cys-2793, Cys-2922/Cys-2972, Cys-3100/Cys-3150, Cys-3280/Cys-3330, Cys-3369/Cys-3419, Cys-3549/Cys-3599, and Cys-3638/Cys-3688. A Phosphoserine modification is found at Ser-3321. Residue Ser-3802 is modified to Phosphoserine. Disulfide bonds link Cys-3815–Cys-3864, Cys-3903–Cys-3952, Cys-4064–Cys-4113, Cys-4152–Cys-4201, Cys-4240–Cys-4289, Cys-4328–Cys-4377, Cys-4416–Cys-4465, Cys-4504–Cys-4553, Cys-4592–Cys-4641, Cys-4680–Cys-4729, Cys-4768–Cys-4817, Cys-4856–Cys-4906, Cys-4945–Cys-4995, and Cys-5034–Cys-5086. Position 4960 is a phosphoserine (Ser-4960). The region spanning 5471–5569 (PPEDAEVVGR…VKIAPAPAPA (99 aa)) is the Fibronectin type-III 2 domain. The cysteines at positions 5590 and 5643 are disulfide-linked. Ser-5699 carries the phosphoserine modification. Residues 5700-5736 (REPTLDSISELPEEDSRVQHLRQEAEETAPDLSEGYS) form a disordered region. Thr-5703 is subject to Phosphothreonine. Phosphoserine is present on Ser-5706. Residues 5713–5724 (EDSRVQHLRQEA) are compositionally biased toward basic and acidic residues. Phosphothreonine is present on Thr-5737. Position 5754 is a phosphoserine (Ser-5754). The region spanning 5821–5850 (LDKAAVKIQAAFKGYKVRKEMKQQEGPVFS) is the IQ domain. Residues 5847 to 5930 (PVFSRTFGDT…QVSTKSGRVS (84 aa)) form the Ig-like 48 domain. Cys-5868 and Cys-5920 are oxidised to a cystine. Residues 5977 to 5996 (EEELFLSADEGPGEPEEPAD) form a disordered region. Ig-like domains are found at residues 6077–6166 (PVFL…AELR), 6209–6298 (PQVL…ARLL), and 6320–6416 (PRIL…LHIS). Cys-6098 and Cys-6150 are oxidised to a cystine. Residues 6504–6546 (KLQVPGGDSDEETKTPSASPRHGRSRPSSSVQESSSESEDGDS) form a disordered region. Ser-6512 carries the post-translational modification Phosphoserine. A Phosphothreonine modification is found at Thr-6518. Low complexity predominate over residues 6519 to 6538 (PSASPRHGRSRPSSSVQESS). Ser-6520 and Ser-6522 each carry phosphoserine. The SH3 domain maps to 6549 to 6616 (EIFDIYVVTA…SPAYLDKRLK (68 aa)). Residues 6642–6826 (RLSSVIQELL…SALPQRAENK (185 aa)) form the DH domain. Positions 6844–6953 (EPIRQGHFIV…WVKEICGIQQ (110 aa)) constitute a PH domain. Arg-6924 is a binding site for a 1,2-diacyl-sn-glycero-3-phospho-(1D-myo-inositol-4,5-bisphosphate). Arg-6929 lines the a 1,2-diacyl-sn-glycero-3-phospho-(1D-myo-inositol-3,4-bisphosphate) pocket. Ig-like domains lie at 6963–7046 (PEFE…GNAS) and 7057–7147 (PRFV…GELY). Cystine bridges form between Cys-6984–Cys-7036 and Cys-7078–Cys-7131. Residues 7200–7257 (ALGPSPGDLPNTRQSEPPAFEEAASQIPGAASGTPEVSQPGTHKGLEQETTSSGSQGW) are disordered. Over residues 7247–7257 (QETTSSGSQGW) the composition is skewed to polar residues. Residues 7306–7394 (PSMQVTIEDV…GQVLCKAELL (89 aa)) enclose the Ig-like 54 domain. Residues 7416 to 7669 (YDVQEEIGRG…TSQCLAHPWF (254 aa)) form the Protein kinase 1 domain. Residues 7422 to 7430 (IGRGVFGFV) and Lys-7445 contribute to the ATP site. The active-site Proton acceptor is the Asp-7535. Disordered stretches follow at residues 7717–7810 (GPPD…SPGC), 7879–8106 (EQAS…TTRK), and 8150–8180 (SSEE…VPLR). Residue Ser-7779 is modified to Phosphoserine. Over residues 7793–7804 (AAVPASPQSAGP) the composition is skewed to low complexity. Basic and acidic residues predominate over residues 7941–7952 (TTAKDRGHKEGF). The span at 7986–7996 (SCHSELGSGSQ) shows a compositional bias: polar residues. Composition is skewed to low complexity over residues 8000 to 8014 (GPPS…PPQS) and 8053 to 8073 (GSLS…ASQV). The residue at position 8161 (Ser-8161) is a Phosphoserine. One can recognise an Ig-like 55 domain in the interval 8380-8464 (KGRDQELSDE…VSNPLGTAVT (85 aa)). Cys-8401 and Cys-8453 are joined by a disulfide. The Fibronectin type-III 3 domain occupies 8474–8566 (PSSSPRPEVG…PSEQVLLGGP (93 aa)). The Protein kinase 2 domain occupies 8590–8842 (FAFQMQIRRG…ASTCLQCGWL (253 aa)). Residues 8596–8604 (IRRGRFSVV) and Lys-8619 each bind ATP. Catalysis depends on Asp-8709, which acts as the Proton acceptor.

Belongs to the protein kinase superfamily. CAMK Ser/Thr protein kinase family. As to quaternary structure, interacts (via protein kinase domain 1) with CDH2 and (via protein kinase domain 1) with ATP1B1. Isoform 2 is found in a complex with DSG2, DESM, GJA1, CDH2 and VCL. Isoform 3 is found in a complex with DSG2, DESM, GJA1, CDH2, ANK3 and VCL. Requires Mg(2+) as cofactor. Autophosphorylated by protein kinase domain 1 and 2. Post-translationally, two small isoforms, one probably containing protein kinase domain 2 and a partial protein kinase domain 1 and one containing only protein kinase domain 2, are glycosylated. Expressed in skeletal muscles including flexor digitorum brevis (FDB), soleus and tibialis anterior muscles, and to a lesser extent in heart muscles (at protein level). Isoform 2 and isoform 3 are expressed in the myocardium (at protein level).

The protein localises to the cytoplasm. It is found in the myofibril. The protein resides in the sarcomere. Its subcellular location is the m line. It localises to the z line. The protein localises to the cell membrane. It is found in the sarcolemma. The protein resides in the nucleus. Its subcellular location is the secreted. It carries out the reaction L-seryl-[protein] + ATP = O-phospho-L-seryl-[protein] + ADP + H(+). The enzyme catalyses L-threonyl-[protein] + ATP = O-phospho-L-threonyl-[protein] + ADP + H(+). Its function is as follows. Structural component of striated muscles which plays a role in myofibrillogenesis. Probably involved in the assembly of myosin into sarcomeric A bands in striated muscle. Has serine/threonine protein kinase activity and phosphorylates N-cadherin CDH2 and sodium/potassium-transporting ATPase subunit ATP1B1. Binds (via the PH domain) strongly to phosphatidylinositol 3,4-bisphosphate (PtdIns(3,4)P2) and phosphatidylinositol 4,5-bisphosphate (PtdIns(4,5)P2), and to a lesser extent to phosphatidylinositol 3-phosphate (PtdIns(3)P), phosphatidylinositol 4-phosphate (PtdIns(4)P), phosphatidylinositol 5-phosphate (PtdIns(5)P) and phosphatidylinositol 3,4,5-trisphosphate (PtdIns(3,4,5)P3). Isoform 2 and isoform 3: bind phosphatidylinositol bisphosphates (PIP2s) via their PH domains and negatively regulate the PI3K/AKT/mTOR signaling pathway, thus contributing to the regulation of cardiomyocyte size and adhesion. In Mus musculus (Mouse), this protein is Obscurin.